The following is a 518-amino-acid chain: Calcium-dependent protein kinase 1 (518 aa).

Basic residues predominate over residues 1 to 10 (MGNRTSRHHR). The segment at 1-49 (MGNRTSRHHRAAPEQPPPQPKPKPQPQQQQQQWPRPQQPTPPPAAAPDA) is disordered. A lipid anchor (N-myristoyl glycine) is attached at G2. Over residues 14–25 (EQPPPQPKPKPQ) the composition is skewed to pro residues. Over residues 26–35 (PQQQQQQWPR) the composition is skewed to low complexity. The segment covering 36 to 45 (PQQPTPPPAA) has biased composition (pro residues). The Protein kinase domain occupies 66-324 (YTFGRELGRG…SAEILNHPWI (259 aa)). Residues 72-80 (LGRGQFGVT) and K95 contribute to the ATP site. Residue D190 is the Proton acceptor of the active site. An autoinhibitory domain region spans residues 330 to 360 (APDKPLDITVISRMKQFRAMNKLKKVALKVV). EF-hand domains follow at residues 367-402 (EEIT…LGTK), 403-438 (ISES…MNRL), 439-474 (EKED…YDMG), and 475-509 (DDKT…NNPE). D380, D382, S384, T386, E391, D416, D418, N420, T422, E427, D452, D454, S456, Y458, E463, D487, D489, D491, R493, and E498 together coordinate Ca(2+).

It belongs to the protein kinase superfamily. Ser/Thr protein kinase family. CDPK subfamily. Expressed in roots and leaf blades.

The protein resides in the membrane. The enzyme catalyses L-seryl-[protein] + ATP = O-phospho-L-seryl-[protein] + ADP + H(+). It catalyses the reaction L-threonyl-[protein] + ATP = O-phospho-L-threonyl-[protein] + ADP + H(+). Its activity is regulated as follows. Activated by calcium. Autophosphorylation may play an important role in the regulation of the kinase activity. In terms of biological role, may play a role in signal transduction pathways that involve calcium as a second messenger. This is Calcium-dependent protein kinase 1 from Oryza sativa subsp. japonica (Rice).